The following is a 468-amino-acid chain: ERO1-like protein alpha (468 aa).

The signal sequence occupies residues 1–23; the sequence is MGRGWGFLFGLLGAVWLLSSGHG. 8 disulfides stabilise this stretch: Cys35–Cys48, Cys37–Cys46, Cys85–Cys391, Cys94–Cys99, Cys94–Cys131, Cys99–Cys104, Cys208–Cys241, and Cys394–Cys397. Ser106 and Ser143 each carry phosphoserine. Phosphoserine; by FAM20C is present on Ser145. Residues Arg187, Thr189, and Trp200 each contribute to the FAD site. FAD-binding residues include Ser252 and His255. The N-linked (GlcNAc...) asparagine glycan is linked to Asn280. Positions 287 and 300 each coordinate FAD. N-linked (GlcNAc...) asparagine glycosylation occurs at Asn384.

It belongs to the EROs family. In terms of assembly, predominantly monomer. May function both as a monomer and a homodimer. Interacts with PDILT. Interacts with ERP44; the interaction results in retention of ERO1A in the endoplasmic reticulum. FAD is required as a cofactor. Post-translationally, N-glycosylated. In terms of processing, the Cys-94/Cys-99 and Cys-394/Cys-397 disulfide bonds constitute the redox-active center. The Cys-94/Cys-99 disulfide bond may accept electron from P4HB and funnel them to the active site disulfide Cys-394/Cys-397. The regulatory Cys-99/Cys-104 disulfide bond stabilizes the other regulatory bond Cys-94/Cys-131. Phosphorylated on Ser-145 by FAM20C in the Golgi which increases its enzymatic activity. Phosphorylation is induced by lactation. It is also induced by hypoxia and reductive stress. As to expression, widely expressed at low level. Expressed at high level in upper digestive tract. Highly expressed in esophagus. Weakly expressed in stomach and duodenum.

The protein localises to the endoplasmic reticulum membrane. It localises to the golgi apparatus lumen. It is found in the secreted. Its subcellular location is the cell projection. The protein resides in the dendrite. With respect to regulation, enzyme activity is tightly regulated to prevent the accumulation of reactive oxygen species in the endoplasmic reticulum. Reversibly down-regulated by the formation of disulfide bonds between the active site Cys-94 and Cys-131, and between Cys-99 and Cys-104. Glutathione may be required to regulate its activity in the endoplasmic reticulum. Oxidoreductase involved in disulfide bond formation in the endoplasmic reticulum. Efficiently reoxidizes P4HB/PDI, the enzyme catalyzing protein disulfide formation, in order to allow P4HB to sustain additional rounds of disulfide formation. Following P4HB reoxidation, passes its electrons to molecular oxygen via FAD, leading to the production of reactive oxygen species (ROS) in the cell. Required for the proper folding of immunoglobulins. Plays an important role in ER stress-induced, CHOP-dependent apoptosis by activating the inositol 1,4,5-trisphosphate receptor IP3R1. Involved in the release of the unfolded cholera toxin from reduced P4HB/PDI in case of infection by V.cholerae, thereby playing a role in retrotranslocation of the toxin. This Homo sapiens (Human) protein is ERO1-like protein alpha.